A 141-amino-acid polypeptide reads, in one-letter code: ATP synthase epsilon chain (141 aa).

This sequence belongs to the ATPase epsilon chain family. In terms of assembly, F-type ATPases have 2 components, CF(1) - the catalytic core - and CF(0) - the membrane proton channel. CF(1) has five subunits: alpha(3), beta(3), gamma(1), delta(1), epsilon(1). CF(0) has three main subunits: a, b and c.

It is found in the cell inner membrane. Its function is as follows. Produces ATP from ADP in the presence of a proton gradient across the membrane. This chain is ATP synthase epsilon chain, found in Cellvibrio japonicus (strain Ueda107) (Pseudomonas fluorescens subsp. cellulosa).